Here is a 382-residue protein sequence, read N- to C-terminus: Farnesyl diphosphate synthase (382 aa).

Positions 81, 84, and 120 each coordinate isopentenyl diphosphate. Asp-127 and Asp-131 together coordinate Mg(2+). Dimethylallyl diphosphate is bound at residue Arg-136. Arg-137 lines the isopentenyl diphosphate pocket. Residues Lys-230, Thr-231, Gln-270, Lys-287, and Lys-296 each coordinate dimethylallyl diphosphate.

It belongs to the FPP/GGPP synthase family. The cofactor is Mg(2+).

The protein resides in the cytoplasm. It catalyses the reaction isopentenyl diphosphate + dimethylallyl diphosphate = (2E)-geranyl diphosphate + diphosphate. It carries out the reaction isopentenyl diphosphate + (2E)-geranyl diphosphate = (2E,6E)-farnesyl diphosphate + diphosphate. It functions in the pathway isoprenoid biosynthesis; farnesyl diphosphate biosynthesis; farnesyl diphosphate from geranyl diphosphate and isopentenyl diphosphate: step 1/1. It participates in isoprenoid biosynthesis; geranyl diphosphate biosynthesis; geranyl diphosphate from dimethylallyl diphosphate and isopentenyl diphosphate: step 1/1. Inhibited by aminobisphosphonate drugs (aBP), such as risedronate and alendronate. Functionally, key enzyme in isoprenoid biosynthesis which catalyzes the formation of farnesyl diphosphate (FPP), a sterol precursor. Involved in the inhibition of cell growth. The sequence is that of Farnesyl diphosphate synthase (fps) from Dictyostelium discoideum (Social amoeba).